Here is a 414-residue protein sequence, read N- to C-terminus: Serine hydroxymethyltransferase (414 aa).

(6S)-5,6,7,8-tetrahydrofolate-binding positions include Leu-116 and 120 to 122 (GHL). N6-(pyridoxal phosphate)lysine is present on Lys-224. (6S)-5,6,7,8-tetrahydrofolate-binding positions include Glu-240 and 348-350 (SPF).

The protein belongs to the SHMT family. In terms of assembly, homodimer. Pyridoxal 5'-phosphate is required as a cofactor.

The protein localises to the cytoplasm. The catalysed reaction is (6R)-5,10-methylene-5,6,7,8-tetrahydrofolate + glycine + H2O = (6S)-5,6,7,8-tetrahydrofolate + L-serine. The protein operates within one-carbon metabolism; tetrahydrofolate interconversion. It participates in amino-acid biosynthesis; glycine biosynthesis; glycine from L-serine: step 1/1. In terms of biological role, catalyzes the reversible interconversion of serine and glycine with tetrahydrofolate (THF) serving as the one-carbon carrier. This reaction serves as the major source of one-carbon groups required for the biosynthesis of purines, thymidylate, methionine, and other important biomolecules. Also exhibits THF-independent aldolase activity toward beta-hydroxyamino acids, producing glycine and aldehydes, via a retro-aldol mechanism. The protein is Serine hydroxymethyltransferase of Campylobacter concisus (strain 13826).